Reading from the N-terminus, the 347-residue chain is N-acetyl-gamma-glutamyl-phosphate reductase (347 aa).

C151 is a catalytic residue.

It belongs to the NAGSA dehydrogenase family. Type 1 subfamily.

The protein resides in the cytoplasm. The catalysed reaction is N-acetyl-L-glutamate 5-semialdehyde + phosphate + NADP(+) = N-acetyl-L-glutamyl 5-phosphate + NADPH + H(+). Its pathway is amino-acid biosynthesis; L-arginine biosynthesis; N(2)-acetyl-L-ornithine from L-glutamate: step 3/4. In terms of biological role, catalyzes the NADPH-dependent reduction of N-acetyl-5-glutamyl phosphate to yield N-acetyl-L-glutamate 5-semialdehyde. The protein is N-acetyl-gamma-glutamyl-phosphate reductase of Corynebacterium aurimucosum (strain ATCC 700975 / DSM 44827 / CIP 107346 / CN-1) (Corynebacterium nigricans).